Consider the following 583-residue polypeptide: Proteasome-associated ATPase (583 aa).

Residues 2–90 (ASREDRDAAN…REEVDRLAQP (89 aa)) adopt a coiled-coil conformation. 271-276 (GCGKTL) is an ATP binding site. Residues 582–583 (YL) are docks into pockets in the proteasome alpha-ring.

The protein belongs to the AAA ATPase family. As to quaternary structure, homohexamer. Assembles into a hexameric ring structure that caps the 20S proteasome core. Strongly interacts with the prokaryotic ubiquitin-like protein Pup through a hydrophobic interface; the interacting region of ARC lies in its N-terminal coiled-coil domain. There is one Pup binding site per ARC hexamer ring. Upon ATP-binding, the C-terminus of ARC interacts with the alpha-rings of the proteasome core, possibly by binding to the intersubunit pockets.

It functions in the pathway protein degradation; proteasomal Pup-dependent pathway. Its function is as follows. ATPase which is responsible for recognizing, binding, unfolding and translocation of pupylated proteins into the bacterial 20S proteasome core particle. May be essential for opening the gate of the 20S proteasome via an interaction with its C-terminus, thereby allowing substrate entry and access to the site of proteolysis. Thus, the C-termini of the proteasomal ATPase may function like a 'key in a lock' to induce gate opening and therefore regulate proteolysis. The chain is Proteasome-associated ATPase from Acidothermus cellulolyticus (strain ATCC 43068 / DSM 8971 / 11B).